We begin with the raw amino-acid sequence, 506 residues long: Cytochrome P450 monooxygenase BOA3 (506 aa).

Residues 15–35 form a helical membrane-spanning segment; the sequence is IYLWIGFVLVVLLAYPTYFAI. A heme-binding site is contributed by Cys451.

This sequence belongs to the cytochrome P450 family. It depends on heme as a cofactor.

The protein localises to the membrane. It functions in the pathway polyketide biosynthesis. In terms of biological role, cytochrome P450 monooxygenase; part of the gene cluster A that mediates the biosynthesis of botcinic acid and its botcinin derivatives, acetate-derived polyketides that contribute to virulence when combined with the sesquiterpene botrydial. Botcinic acid and its derivatives have been shown to induce chlorosis and necrosis during host plant infection, but also have antifungal activities. Two polyketide synthases, BOA6 and BOA9, are involved in the biosynthesis of botcinins. BOA6 mediates the formation of the per-methylated tetraketide core by condensation of four units of malonyl-CoA with one unit of acetyl-CoA, which would be methylated in activated methylene groups to yield a bicyclic acid intermediate that could then either be converted to botrylactone derivatives or lose the starter acetate unit through a retro-Claisen type C-C bond cleavage to yield botcinin derivatives. The second polyketide synthase, BOA9, is probably required for the biosynthesis of the tetraketide side chain of botcinins. The methyltransferase (MT) domain within BOA6 is probably responsible for the incorporation of four methyl groups. The trans-enoyl reductase BOA5 might take over the enoyl reductase function of BOA6 that misses an ER domain. The monooxygenases BOA2, BOA3 and BOA4 might be involved in further hydroxylations at C4, C5 and C8, whereas BOA7, close to BOA9, could potentially be involved in the hydroxylation at C4 in the side chain of botcinins. The sequence is that of Cytochrome P450 monooxygenase BOA3 from Botryotinia fuckeliana (strain B05.10) (Noble rot fungus).